Here is a 512-residue protein sequence, read N- to C-terminus: Gustatory and odorant receptor 63a (512 aa).

The disordered stretch occupies residues M1–M24. Residues M1–S129 are Cytoplasmic-facing. Residues A130–A150 form a helical membrane-spanning segment. The Extracellular portion of the chain corresponds to N151–E166. A helical membrane pass occupies residues A167–W187. Over Y188 to K222 the chain is Cytoplasmic. Residues A223 to V243 form a helical membrane-spanning segment. Residues T244–M265 lie on the Extracellular side of the membrane. A glycan (N-linked (GlcNAc...) asparagine) is linked at N261. The helical transmembrane segment at L266–A285 threads the bilayer. At E286–Y324 the chain is on the cytoplasmic side. Residues T325–M345 traverse the membrane as a helical segment. Residues S346–E350 are Extracellular-facing. The helical transmembrane segment at G351–F371 threads the bilayer. The Cytoplasmic segment spans residues Y372–K436. Residues G437–P457 traverse the membrane as a helical segment. The Extracellular portion of the chain corresponds to T458–G512. N-linked (GlcNAc...) asparagine glycosylation is present at N468.

This sequence belongs to the insect chemoreceptor superfamily. Gustatory receptor (GR) family. Gr21a subfamily. In terms of assembly, gr21a and Gr63a probably form a heterodimer that responds to CO(2). As to expression, expressed in the medial aspect of the third antennal segment. Carbon dioxide-responsive neurons coexpress Gr21a and Gr63a in a pair of chemosensory receptors at both larval and adult life stages.

Its subcellular location is the cell membrane. Gustatory and odorant receptor which mediates acceptance or avoidance behavior, depending on its substrates. Gr21a and Gr63a together are sufficient for carbon dioxide detection and avoidance behavior. It is possible that the CO(2) receptors Gr63a and Gr21a activate the TRPC channels through Galpha49B and Plc21C. This innate olfactory avoidance behavior can be inhibited by inhibitory interactions of the odors such as 1-hexanol and 2,3-butanedione with Gr21a and Gr63a. The chain is Gustatory and odorant receptor 63a (Gr63a) from Drosophila melanogaster (Fruit fly).